Consider the following 396-residue polypeptide: NADH-quinone oxidoreductase subunit D (396 aa).

Belongs to the complex I 49 kDa subunit family. In terms of assembly, NDH-1 is composed of 14 different subunits. Subunits NuoB, C, D, E, F, and G constitute the peripheral sector of the complex.

It localises to the cell inner membrane. The catalysed reaction is a quinone + NADH + 5 H(+)(in) = a quinol + NAD(+) + 4 H(+)(out). NDH-1 shuttles electrons from NADH, via FMN and iron-sulfur (Fe-S) centers, to quinones in the respiratory chain. The immediate electron acceptor for the enzyme in this species is believed to be ubiquinone. Couples the redox reaction to proton translocation (for every two electrons transferred, four hydrogen ions are translocated across the cytoplasmic membrane), and thus conserves the redox energy in a proton gradient. The polypeptide is NADH-quinone oxidoreductase subunit D (Agrobacterium fabrum (strain C58 / ATCC 33970) (Agrobacterium tumefaciens (strain C58))).